A 1104-amino-acid polypeptide reads, in one-letter code: General transcription factor II-I repeat domain-containing protein 1 (1104 aa).

Glycyl lysine isopeptide (Lys-Gly) (interchain with G-Cter in SUMO2) cross-links involve residues Lys27, Lys184, Lys212, Lys225, Lys238, Lys271, Lys337, Lys436, Lys439, and Lys443. One copy of the GTF2I-like 1 repeat lies at 119–213; that stretch reads LEQCSDVYLL…PDDGGQDTKA (95 aa). One copy of the GTF2I-like 2 repeat lies at 342 to 436; it reads IKEMEDINTL…FDERIFTGNK (95 aa). Phosphoserine is present on Ser448. The disordered stretch occupies residues 509–559; that stretch reads SDPSPTSEEMTDSLPGHLPSEDSGYGMEMPADKGPSEEPWSEERPAEESPG. Over residues 538–555 the composition is skewed to basic and acidic residues; that stretch reads PADKGPSEEPWSEERPAE. Residues 556-650 form a GTF2I-like 3 repeat; sequence ESPGDVIRPL…ELLTDGVKEP (95 aa). Residues Lys567, Lys579, Lys588, Lys622, Lys638, Lys669, Lys709, Lys717, Lys757, Lys759, and Lys772 each participate in a glycyl lysine isopeptide (Lys-Gly) (interchain with G-Cter in SUMO2) cross-link. One copy of the GTF2I-like 4 repeat lies at 681-775; it reads LSRIDIANTL…FQGLIPKPET (95 aa). A disordered region spans residues 783-802; sequence EAGKTTRPRRLQQDTWQPDE. One copy of the GTF2I-like 5 repeat lies at 805–899; the sequence is ANRLGEKVIL…LQPFAEVCND (95 aa). Glycyl lysine isopeptide (Lys-Gly) (interchain with G-Cter in SUMO2) cross-links involve residues Lys841 and Lys901. The stretch at 908-1002 is one GTF2I-like 6 repeat; that stretch reads SNKLGKKVIL…LQPFGDVCNN (95 aa). Disordered regions lie at residues 1001–1044 and 1058–1104; these read NNAK…VAST and LHPN…LPTR. The short motif at 1012–1019 is the Nuclear localization signal element; the sequence is PKRKRKRV. The span at 1021–1043 shows a compositional bias: low complexity; it reads EGNSVSSSSSSSSSSSNPESVAS.

This sequence belongs to the TFII-I family. In terms of assembly, interacts with the retinoblastoma protein (RB1) via its C-terminus. Widely expressed.

Its subcellular location is the nucleus. In terms of biological role, may be a transcription regulator involved in cell-cycle progression and skeletal muscle differentiation. May repress GTF2I transcriptional functions, by preventing its nuclear residency, or by inhibiting its transcriptional activation. May contribute to slow-twitch fiber type specificity during myogenesis and in regenerating muscles. Binds troponin I slow-muscle fiber enhancer (USE B1). Binds specifically and with high affinity to the EFG sequences derived from the early enhancer of HOXC8. This is General transcription factor II-I repeat domain-containing protein 1 (Gtf2ird1) from Mus musculus (Mouse).